Consider the following 157-residue polypeptide: Acetyltransferase PseH (157 aa).

The 148-residue stretch at 5–152 folds into the N-acetyltransferase domain; sequence KNFAELNSQE…YYVCLKQSHC (148 aa).

Catalyzes the third step in the biosynthesis of pseudaminic acid, a sialic-acid-like sugar that is used to modify flagellin. Mediates N-4 acetylation of UDP-4-amino-4,6-dideoxy-beta-L-AltNAc to form UDP-2,4-diacetamido-2,4,6-trideoxy-beta-L-altropyranose. The polypeptide is Acetyltransferase PseH (pseH) (Campylobacter jejuni subsp. jejuni serotype O:2 (strain ATCC 700819 / NCTC 11168)).